The following is a 261-amino-acid chain: Cytochrome c oxidase subunit 3 (261 aa).

The Mitochondrial matrix portion of the chain corresponds to 1 to 15 (MTHQTHAYHMVNPSP). Residues 16–34 (WPLTGALSALLMTSGLAMW) traverse the membrane as a helical segment. Topologically, residues 35–40 (FHFNST) are mitochondrial intermembrane. Residues 41–66 (LLLAMGLLTNILTMYQWWRDIIREST) form a helical membrane-spanning segment. Residues 67 to 72 (FQGHHT) are Mitochondrial matrix-facing. A helical membrane pass occupies residues 73–105 (SIVQKGLRYGMILFIISEVFFFSGFFWAFYHSS). Residues 106–128 (LAPTPELGGCWPPTGIHPLNPLE) lie on the Mitochondrial intermembrane side of the membrane. A helical membrane pass occupies residues 129–152 (VPLLNTSVLLASGVSITWAHHSLM). At 153–155 (EGN) the chain is on the mitochondrial matrix side. A helical transmembrane segment spans residues 156 to 183 (RKNMLQGLFITISLGVYFTLLQASEYYE). At 184 to 190 (ASFTISD) the chain is on the mitochondrial intermembrane side. The chain crosses the membrane as a helical span at residues 191 to 223 (GVYGSTFFVATGFHGLHVIIGSTFLIVCFLRQL). The Mitochondrial matrix segment spans residues 224–232 (KFHFTSSHH). Residues 233 to 256 (FGFEAAAWYWHFVDVVWLFLYVSI) form a helical membrane-spanning segment. Residues 257 to 261 (YWWGS) are Mitochondrial intermembrane-facing.

It belongs to the cytochrome c oxidase subunit 3 family. Component of the cytochrome c oxidase (complex IV, CIV), a multisubunit enzyme composed of 14 subunits. The complex is composed of a catalytic core of 3 subunits MT-CO1, MT-CO2 and MT-CO3, encoded in the mitochondrial DNA, and 11 supernumerary subunits COX4I, COX5A, COX5B, COX6A, COX6B, COX6C, COX7A, COX7B, COX7C, COX8 and NDUFA4, which are encoded in the nuclear genome. The complex exists as a monomer or a dimer and forms supercomplexes (SCs) in the inner mitochondrial membrane with NADH-ubiquinone oxidoreductase (complex I, CI) and ubiquinol-cytochrome c oxidoreductase (cytochrome b-c1 complex, complex III, CIII), resulting in different assemblies (supercomplex SCI(1)III(2)IV(1) and megacomplex MCI(2)III(2)IV(2)).

Its subcellular location is the mitochondrion inner membrane. It catalyses the reaction 4 Fe(II)-[cytochrome c] + O2 + 8 H(+)(in) = 4 Fe(III)-[cytochrome c] + 2 H2O + 4 H(+)(out). Functionally, component of the cytochrome c oxidase, the last enzyme in the mitochondrial electron transport chain which drives oxidative phosphorylation. The respiratory chain contains 3 multisubunit complexes succinate dehydrogenase (complex II, CII), ubiquinol-cytochrome c oxidoreductase (cytochrome b-c1 complex, complex III, CIII) and cytochrome c oxidase (complex IV, CIV), that cooperate to transfer electrons derived from NADH and succinate to molecular oxygen, creating an electrochemical gradient over the inner membrane that drives transmembrane transport and the ATP synthase. Cytochrome c oxidase is the component of the respiratory chain that catalyzes the reduction of oxygen to water. Electrons originating from reduced cytochrome c in the intermembrane space (IMS) are transferred via the dinuclear copper A center (CU(A)) of subunit 2 and heme A of subunit 1 to the active site in subunit 1, a binuclear center (BNC) formed by heme A3 and copper B (CU(B)). The BNC reduces molecular oxygen to 2 water molecules using 4 electrons from cytochrome c in the IMS and 4 protons from the mitochondrial matrix. In Equus caballus (Horse), this protein is Cytochrome c oxidase subunit 3 (MT-CO3).